Reading from the N-terminus, the 457-residue chain is PDZ and LIM domain protein 7 (457 aa).

The 85-residue stretch at Met1 to Gln85 folds into the PDZ domain. Position 78 is a phosphoserine (Ser78). Disordered regions lie at residues Leu81 to Asn132 and Phe186 to Val226. At Thr96 the chain carries Phosphothreonine. At Arg103 the chain carries Asymmetric dimethylarginine. The residue at position 111 (Ser111) is a Phosphoserine. Position 247 is a phosphoserine (Ser247). LIM zinc-binding domains follow at residues Pro280–Ala338, Pro339–Thr398, and Lys399–Val457.

Binds via its LIM zinc-binding 3 domain (LIM 3) domain to endocytic codes of INSR, but not with those of IGF1R, LDLR, TFRC, or EGFR. Interacts with various PKC isoforms through the LIM zinc-binding domains. Binds to RET in a phosphorylation-independent manner via its LIM zinc-binding 2 domain (LIM 2). Probably part of a complex with SHC and the RET dimer. Interacts with TPM2, TBX4 and TBX5. Interacts (via LIM domains) with SIPA1L1. In terms of tissue distribution, expressed in kidney, heart, brain, lung, and skeletal muscle. Overexpression results in the synthesis of an unidentified soluble factor which acts on cells in the osteoblast lineage causing them to differentiate and secrete BMP-2.

The protein resides in the cytoplasm. The protein localises to the cytoskeleton. In terms of biological role, may function as a scaffold on which the coordinated assembly of proteins can occur. May play a role as an adapter that, via its PDZ domain, localizes LIM-binding proteins to actin filaments of both skeletal muscle and nonmuscle tissues. Involved in both of the two fundamental mechanisms of bone formation, direct bone formation (e.g. embryonic flat bones mandible and cranium), and endochondral bone formation (e.g. embryonic long bone development). Plays a role during fracture repair. Involved in BMP6 signaling pathway. This Rattus norvegicus (Rat) protein is PDZ and LIM domain protein 7 (Pdlim7).